A 307-amino-acid polypeptide reads, in one-letter code: MKIDKEDDQQQQMRRVAFFAVAVSTAAVISSIVTLPMIYSYVQSFQSHLIMETEFCKTRARDMWVEMQVLHKSGVTRSRRDAGYKEGSGSGGSGSGGYGGPTGAGADIGPTCCPCQQGPAGPPGPAGDTGPNGNDGHHGAPGVPGKEGSILSSALPPSEPCIICPPGPQGAVGQQGPKGPPGPKGKSQERAADGKNGEPGMIGPPGPPGGVGEPGPPGPAGQPGRVIQVNGAAGPAGPRGVKGPPGPKGLPGIAGLTEIGGQGPPGDAGGPGPVGGQGPPGPQGPQGPPGDEGSCDHCPEPRTPPGY.

Disordered regions lie at residues 76-102 (TRSR…GGPT) and 116-307 (QQGP…PPGY). Residues 86 to 102 (EGSGSGGSGSGGYGGPT) show a composition bias toward gly residues. Triple-helical region stretches follow at residues 89–105 (GSGG…TGAG), 118–150 (GPAG…EGSI), 167–187 (GPQG…KGKS), 194–226 (GKNG…PGRV), 231–257 (GAAG…AGLT), and 260–295 (GGQG…EGSC). The span at 157-168 (PSEPCIICPPGP) shows a compositional bias: pro residues. Positions 186–196 (KSQERAADGKN) are enriched in basic and acidic residues. The segment covering 202–220 (IGPPGPPGGVGEPGPPGPA) has biased composition (pro residues). Positions 231-242 (GAAGPAGPRGVK) are enriched in low complexity. The segment covering 258–278 (EIGGQGPPGDAGGPGPVGGQG) has biased composition (gly residues). Residues 279-288 (PPGPQGPQGP) show a composition bias toward pro residues.

It belongs to the cuticular collagen family. In terms of assembly, collagen polypeptide chains are complexed within the cuticle by disulfide bonds and other types of covalent cross-links.

In terms of biological role, nematode cuticles are composed largely of collagen-like proteins. The cuticle functions both as an exoskeleton and as a barrier to protect the worm from its environment. The chain is Cuticle collagen 36 (col-36) from Caenorhabditis elegans.